Consider the following 301-residue polypeptide: Transcription factor bHLH103 (301 aa).

The KRAB domain occupies 29–106; that stretch reads PRSAEIVVDF…LEGLFDSSEQ (78 aa). 2 disordered regions span residues 161-184 and 239-272; these read EKSG…ETPS and TSPH…PRQD. A bHLH domain is found at 180–229; the sequence is LETPSHFPSFKVRKEKLGDRITALQQLVSPFGKTDTASVLHDAIDYIKFL. The span at 239–269 shows a compositional bias: polar residues; sequence TSPHLNSIGSGEQKQWSDKSSNNTHNQNCSP.

As to quaternary structure, homodimer. In terms of tissue distribution, mature root endodermis.

It localises to the nucleus. This chain is Transcription factor bHLH103 (BHLH103), found in Arabidopsis thaliana (Mouse-ear cress).